The chain runs to 491 residues: Galactose-1-phosphate uridylyltransferase 1 (491 aa).

It belongs to the galactose-1-phosphate uridylyltransferase type 2 family.

Its subcellular location is the cytoplasm. It carries out the reaction alpha-D-galactose 1-phosphate + UDP-alpha-D-glucose = alpha-D-glucose 1-phosphate + UDP-alpha-D-galactose. The protein operates within carbohydrate metabolism; galactose metabolism. This is Galactose-1-phosphate uridylyltransferase 1 (galT1) from Streptococcus pneumoniae serotype 4 (strain ATCC BAA-334 / TIGR4).